A 128-amino-acid polypeptide reads, in one-letter code: Large ribosomal subunit protein bL12c (128 aa).

Belongs to the bacterial ribosomal protein bL12 family. In terms of assembly, homodimer. Part of the ribosomal stalk of the 50S ribosomal subunit. Forms a multimeric L10(L12)X complex, where L10 forms an elongated spine to which 2 to 4 L12 dimers bind in a sequential fashion. Binds GTP-bound translation factors.

The protein resides in the plastid. It is found in the chloroplast. Its function is as follows. Forms part of the ribosomal stalk which helps the ribosome interact with GTP-bound translation factors. Is thus essential for accurate translation. In Phaeodactylum tricornutum (strain CCAP 1055/1), this protein is Large ribosomal subunit protein bL12c.